The following is a 260-amino-acid chain: GDNF family receptor alpha-4 (260 aa).

The signal sequence occupies residues 1 to 23 (MAHCMESALLLLLLLGSASFTDG). An N-linked (GlcNAc...) asparagine glycan is attached at asparagine 184. Threonine 237 carries GPI-anchor amidated threonine lipidation. The propeptide at 238-260 (AGCCFPRVSWLYALTALALQALL) is removed in mature form.

This sequence belongs to the GDNFR family. In terms of assembly, interacts with ARTN ligand and RET: forms a 2:2:2 ternary complex composed of ARTN ligand, GFRA3 and RET receptor. Interacts with SORL1. In terms of tissue distribution, expressed in many tissues including adrenal medulla, brain neurons, with highest levels in the cerebral cortex and hippocampus. Moderate levels found in the gut circular muscle and myenteric ganglia as well as in other peripheral ganglia, including the sensory dorsal root and trigeminal as well as superior cervical and sympathetic chain ganglia. Isoform a1, isoform a2, isoform b1 and isoform b2 are exclusively found in the thyroid, parthyroid and pituitary glands.

Its subcellular location is the cell membrane. It is found in the secreted. In terms of biological role, receptor for persephin (PSPN), a growth factor that exhibits neurotrophic activity on mesencephalic dopaminergic and motor neurons. Acts by binding to its coreceptor, GFRA4, leading to autophosphorylation and activation of the RET receptor. May be important in C-cell development and, in the postnatal development of the adrenal medulla. This Mus musculus (Mouse) protein is GDNF family receptor alpha-4 (Gfra4).